The sequence spans 485 residues: Glycogen synthase (485 aa).

Lys15 contacts ADP-alpha-D-glucose.

Belongs to the glycosyltransferase 1 family. Bacterial/plant glycogen synthase subfamily.

The catalysed reaction is [(1-&gt;4)-alpha-D-glucosyl](n) + ADP-alpha-D-glucose = [(1-&gt;4)-alpha-D-glucosyl](n+1) + ADP + H(+). Its pathway is glycan biosynthesis; glycogen biosynthesis. Synthesizes alpha-1,4-glucan chains using ADP-glucose. The sequence is that of Glycogen synthase from Geobacillus thermodenitrificans (strain NG80-2).